Here is a 225-residue protein sequence, read N- to C-terminus: Uracil-DNA glycosylase (225 aa).

Asp65 acts as the Proton acceptor in catalysis.

This sequence belongs to the uracil-DNA glycosylase (UDG) superfamily. UNG family.

The protein resides in the cytoplasm. It carries out the reaction Hydrolyzes single-stranded DNA or mismatched double-stranded DNA and polynucleotides, releasing free uracil.. In terms of biological role, excises uracil residues from the DNA which can arise as a result of misincorporation of dUMP residues by DNA polymerase or due to deamination of cytosine. This is Uracil-DNA glycosylase from Anoxybacillus flavithermus (strain DSM 21510 / WK1).